A 1549-amino-acid chain; its full sequence is ATP-binding cassette sub-family C member 9 (1549 aa).

The Extracellular segment spans residues methionine 1–asparagine 30. Asparagine 9 is a glycosylation site (N-linked (GlcNAc...) asparagine). The helical transmembrane segment at leucine 31–serine 51 threads the bilayer. Residues glutamine 52–arginine 72 are Cytoplasmic-facing. Residues tryptophan 73–serine 93 form a helical membrane-spanning segment. Topologically, residues aspartate 94 to histidine 101 are extracellular. A helical membrane pass occupies residues leucine 102–tyrosine 122. Over histidine 123–lysine 132 the chain is Cytoplasmic. A helical transmembrane segment spans residues leucine 133–valine 153. The Extracellular portion of the chain corresponds to lysine 154–phenylalanine 167. Residues cysteine 168 to isoleucine 188 traverse the membrane as a helical segment. Over arginine 189 to serine 301 the chain is Cytoplasmic. Residues isoleucine 297–lysine 597 form the ABC transmembrane type-1 1 domain. Residues threonine 302–valine 322 traverse the membrane as a helical segment. Over glutamine 323–asparagine 350 the chain is Extracellular. 4 N-linked (GlcNAc...) asparagine glycosylation sites follow: asparagine 326, asparagine 330, asparagine 333, and asparagine 334. The chain crosses the membrane as a helical span at residues alanine 351–alanine 371. Residues serine 372–glutamine 423 are Cytoplasmic-facing. A helical transmembrane segment spans residues leucine 424–glycine 444. Over valine 445–serine 455 the chain is Extracellular. Residues alanine 456–lysine 476 form a helical membrane-spanning segment. The Cytoplasmic segment spans residues leucine 477–threonine 531. The helical transmembrane segment at phenylalanine 532 to leucine 552 threads the bilayer. Topologically, residues alanine 553 to alanine 571 are extracellular. Residues phenylalanine 572–valine 592 form a helical membrane-spanning segment. Topologically, residues arginine 593–glycine 990 are cytoplasmic. An ABC transporter 1 domain is found at isoleucine 672 to threonine 912. ATP is bound at residue glycine 705–serine 712. Residues arginine 944–methionine 967 form a disordered region. The segment covering glutamate 951 to asparagine 966 has biased composition (acidic residues). Residues phenylalanine 991–isoleucine 1011 form a helical membrane-spanning segment. An ABC transmembrane type-1 2 domain is found at leucine 994–valine 1274. At aspartate 1012 to tyrosine 1034 the chain is on the extracellular side. The helical transmembrane segment at tyrosine 1035–leucine 1055 threads the bilayer. At threonine 1056–methionine 1127 the chain is on the cytoplasmic side. A helical membrane pass occupies residues isoleucine 1128–phenylalanine 1148. The Extracellular portion of the chain corresponds to isoleucine 1149–serine 1245. Residues glycine 1246–valine 1266 form a helical membrane-spanning segment. The Cytoplasmic segment spans residues arginine 1267–lysine 1549. In terms of domain architecture, ABC transporter 2 spans isoleucine 1312 to methionine 1546. Glycine 1346 to serine 1353 contacts ATP.

The protein belongs to the ABC transporter superfamily. ABCC family. Conjugate transporter (TC 3.A.1.208) subfamily. As to quaternary structure, interacts with KCNJ11. Interacts with KCNJ8.

The protein localises to the membrane. Subunit of ATP-sensitive potassium channels (KATP). Can form cardiac and smooth muscle-type KATP channels with KCNJ11. KCNJ11 forms the channel pore while ABCC9 is required for activation and regulation. Can form a sulfonylurea-sensitive but ATP-insensitive potassium channel with KCNJ8. This is ATP-binding cassette sub-family C member 9 (ABCC9) from Homo sapiens (Human).